A 369-amino-acid chain; its full sequence is Microtubule-associated protein 6 homolog (369 aa).

Disordered regions lie at residues 41–213 and 251–369; these read LPAQ…AADA and AQYK…EAKE. Over residues 70–80 the composition is skewed to low complexity; sequence APGPARPGTAP. Mn stretches follow at residues 87–110 and 122–145; these read DSVMRHDYKPWKVQRPEPSCKPKS and ETQYQKDFRAWPIPKRGDHPWIPK. Composition is skewed to basic and acidic residues over residues 89–110, 118–142, and 179–209; these read VMRHDYKPWKVQRPEPSCKPKS, PFEKETQYQKDFRAWPIPKRGDHPW, and EHPKAARPGDAREKGRQRGDEAGGQEGRGRA. The tract at residues 228–251 is mn 3; it reads SSSYRNEFRPWIDVKPVKAIKAKA. The span at 297–308 shows a compositional bias: basic and acidic residues; it reads PYKEPPKVEKPS. Positions 312–328 are enriched in basic residues; the sequence is SKPKKTTTSHKPLKKAK. Basic and acidic residues predominate over residues 350–369; sequence KPEDKEKSKEMNNKLAEAKE.

It belongs to the STOP family.

Its subcellular location is the cytoplasm. The protein localises to the cytoskeleton. Involved in microtubule stabilization in many cell types, including neuronal cells. Specifically has microtubule cold stabilizing activity. Involved in dendrite morphogenesis and maintenance by regulating lysosomal trafficking. The protein is Microtubule-associated protein 6 homolog (MAP6) of Gallus gallus (Chicken).